The sequence spans 623 residues: tRNA uridine 5-carboxymethylaminomethyl modification enzyme MnmG (623 aa).

12–17 (GAGHAG) provides a ligand contact to FAD. Position 272–286 (272–286 (GPRYCPSIEDKINRF)) interacts with NAD(+).

The protein belongs to the MnmG family. As to quaternary structure, homodimer. Heterotetramer of two MnmE and two MnmG subunits. FAD is required as a cofactor.

The protein resides in the cytoplasm. NAD-binding protein involved in the addition of a carboxymethylaminomethyl (cmnm) group at the wobble position (U34) of certain tRNAs, forming tRNA-cmnm(5)s(2)U34. The sequence is that of tRNA uridine 5-carboxymethylaminomethyl modification enzyme MnmG from Flavobacterium johnsoniae (strain ATCC 17061 / DSM 2064 / JCM 8514 / BCRC 14874 / CCUG 350202 / NBRC 14942 / NCIMB 11054 / UW101) (Cytophaga johnsonae).